A 369-amino-acid chain; its full sequence is Peptide chain release factor 2 (369 aa).

Glutamine 251 is subject to N5-methylglutamine.

It belongs to the prokaryotic/mitochondrial release factor family. Methylated by PrmC. Methylation increases the termination efficiency of RF2.

It is found in the cytoplasm. Peptide chain release factor 2 directs the termination of translation in response to the peptide chain termination codons UGA and UAA. The polypeptide is Peptide chain release factor 2 (prfB) (Chlamydia pneumoniae (Chlamydophila pneumoniae)).